The following is a 338-amino-acid chain: Probable G-protein coupled receptor 160 (338 aa).

Residues 1–23 (MTALSSENCSFQYQLRQTNQPLD) are Extracellular-facing. A glycan (N-linked (GlcNAc...) asparagine) is linked at Asn-8. The helical transmembrane segment at 24–44 (VNYLLFLIILGKILLNILTLG) threads the bilayer. Topologically, residues 45-58 (MRRKNTCQNFMEYF) are cytoplasmic. The chain crosses the membrane as a helical span at residues 59–79 (CISLAFVDLLLLVNISIILYF). Topologically, residues 80–93 (RDFVLLSIRFTKYH) are extracellular. A helical transmembrane segment spans residues 94 to 114 (ICLFTQIISFTYGFLHYPVFL). Residues 115-136 (TACIDYCLNFSKTTKLSFKCQK) lie on the Cytoplasmic side of the membrane. A helical transmembrane segment spans residues 137–157 (LFYFFTVILIWISVLAYVLGD). Over 158-177 (PAIYQSLKAQNAYSRHCPFY) the chain is Extracellular. A helical transmembrane segment spans residues 178–198 (VSIQSYWLSFFMVMILFVAFI). Over 199 to 244 (TCWEEVTTLVQAIRITSYMNETILYFPFSSHSSYTVRSKKIFLSKL) the chain is Cytoplasmic. The helical transmembrane segment at 245 to 265 (IVCFLSTWLPFVLLQVIIVLL) threads the bilayer. Residues 266–268 (KVQ) are Extracellular-facing. A helical membrane pass occupies residues 269-289 (IPAYIEMNIPWLYFVNSFLIA). At 290–338 (TVYWFNCHKLNLKDIGLPLDPFVNWKCCFIPLTIPNLEQIEKPISIMIC) the chain is on the cytoplasmic side.

This sequence belongs to the G-protein coupled receptor 1 family.

The protein localises to the cell membrane. Orphan receptor. In Homo sapiens (Human), this protein is Probable G-protein coupled receptor 160 (GPR160).